The sequence spans 298 residues: Nucleotide-binding protein MAV_3359 (298 aa).

18–25 provides a ligand contact to ATP; the sequence is GLSGAGRG. 69-72 serves as a coordination point for GTP; that stretch reads DVRS.

The protein belongs to the RapZ-like family.

Functionally, displays ATPase and GTPase activities. This Mycobacterium avium (strain 104) protein is Nucleotide-binding protein MAV_3359.